The sequence spans 240 residues: Glutathione S-transferase theta-1 (240 aa).

The GST N-terminal domain occupies 2–82 (VLELYLDLLS…YLAHKYKVPD (81 aa)). Glutathione contacts are provided by residues His-40, 53 to 54 (RV), and 66 to 67 (ES). The GST C-terminal domain maps to 88–222 (DLQARARVDE…VILKVKDCPP (135 aa)).

Belongs to the GST superfamily. Theta family. Homodimer. As to expression, in liver, highest expression found in central vein limiting plate hepatocytes. Also expressed in interlobular bile duct epithelial cells. In lung, expressed in club cells and ciliated cells of the bronchiolar epithelium and in type II alveolar cells of the lung parenchyma.

The protein resides in the cytoplasm. The protein localises to the nucleus. It catalyses the reaction RX + glutathione = an S-substituted glutathione + a halide anion + H(+). Conjugation of reduced glutathione to a wide number of exogenous and endogenous hydrophobic electrophiles. Also binds steroids, bilirubin, carcinogens and numerous organic anions. Has dichloromethane dehalogenase activity. This is Glutathione S-transferase theta-1 (Gstt1) from Mus musculus (Mouse).